A 338-amino-acid chain; its full sequence is Glyceraldehyde-3-phosphate dehydrogenase, cytosolic (338 aa).

Residues 13–14, Asp-35, and Arg-82 each bind NAD(+); that span reads RI. Residues 153-155, Thr-184, 213-214, and Arg-236 each bind D-glyceraldehyde 3-phosphate; these read SCT and TG. Cys-154 (nucleophile) is an active-site residue. Asn-318 serves as a coordination point for NAD(+).

This sequence belongs to the glyceraldehyde-3-phosphate dehydrogenase family. In terms of assembly, homotetramer.

The protein localises to the cytoplasm. The catalysed reaction is D-glyceraldehyde 3-phosphate + phosphate + NAD(+) = (2R)-3-phospho-glyceroyl phosphate + NADH + H(+). It participates in carbohydrate degradation; glycolysis; pyruvate from D-glyceraldehyde 3-phosphate: step 1/5. Key enzyme in glycolysis that catalyzes the first step of the pathway by converting D-glyceraldehyde 3-phosphate (G3P) into 3-phospho-D-glyceroyl phosphate. Essential for the maintenance of cellular ATP levels and carbohydrate metabolism. The sequence is that of Glyceraldehyde-3-phosphate dehydrogenase, cytosolic (GAPC) from Dianthus caryophyllus (Carnation).